Here is a 349-residue protein sequence, read N- to C-terminus: Quinone oxidoreductase-like protein 2 (349 aa).

Residue K35 is modified to N6-acetyllysine. K200 is modified (N6-succinyllysine).

The protein belongs to the zinc-containing alcohol dehydrogenase family. Quinone oxidoreductase subfamily.

The chain is Quinone oxidoreductase-like protein 2 from Bos taurus (Bovine).